A 286-amino-acid chain; its full sequence is MSGIDDLPPLRDVIKRHDLSARKSLGQNFLLDLNLLTRIARAAGPLDGATVIEIGPGPGGLTRALLALGAAKVIAIERDERALGALQEIAAHYPGRLEIVCADATIYDPRPLLGGARAKIVANLPYNIATPLLIGWLSIEPWPPWYDTMVLMFQREVAERIVAREDDEAYGRLAVLANWRAETKLLFDISPAAFVPQPKVTSSVVRLVPRETPEPCDRRMLEQVAAAAFGQRRKMLRQSLKPLGVDPARLAAAAGVDPTRRAETIAVSGFVAMARELTDIRAIKSV.

S-adenosyl-L-methionine contacts are provided by Asn-28, Leu-30, Gly-55, Glu-77, Asp-103, and Asn-123.

This sequence belongs to the class I-like SAM-binding methyltransferase superfamily. rRNA adenine N(6)-methyltransferase family. RsmA subfamily.

The protein localises to the cytoplasm. It catalyses the reaction adenosine(1518)/adenosine(1519) in 16S rRNA + 4 S-adenosyl-L-methionine = N(6)-dimethyladenosine(1518)/N(6)-dimethyladenosine(1519) in 16S rRNA + 4 S-adenosyl-L-homocysteine + 4 H(+). Functionally, specifically dimethylates two adjacent adenosines (A1518 and A1519) in the loop of a conserved hairpin near the 3'-end of 16S rRNA in the 30S particle. May play a critical role in biogenesis of 30S subunits. In Rhodopseudomonas palustris (strain BisB18), this protein is Ribosomal RNA small subunit methyltransferase A.